The sequence spans 403 residues: S-adenosylmethionine synthase (403 aa).

An ATP-binding site is contributed by H22. D24 is a Mg(2+) binding site. E50 is a binding site for K(+). L-methionine contacts are provided by E63 and Q107. Residues 107–117 (QSPDIAMGVDK) are flexible loop. ATP is bound by residues 182 to 184 (DAK), 248 to 249 (RF), D257, 263 to 264 (RK), A280, and K284. An L-methionine-binding site is contributed by D257. K288 serves as a coordination point for L-methionine.

Belongs to the AdoMet synthase family. As to quaternary structure, homotetramer; dimer of dimers. Requires Mg(2+) as cofactor. K(+) serves as cofactor.

It is found in the cytoplasm. It catalyses the reaction L-methionine + ATP + H2O = S-adenosyl-L-methionine + phosphate + diphosphate. It participates in amino-acid biosynthesis; S-adenosyl-L-methionine biosynthesis; S-adenosyl-L-methionine from L-methionine: step 1/1. Functionally, catalyzes the formation of S-adenosylmethionine (AdoMet) from methionine and ATP. The overall synthetic reaction is composed of two sequential steps, AdoMet formation and the subsequent tripolyphosphate hydrolysis which occurs prior to release of AdoMet from the enzyme. The polypeptide is S-adenosylmethionine synthase (Chloroflexus aurantiacus (strain ATCC 29366 / DSM 635 / J-10-fl)).